Here is a 92-residue protein sequence, read N- to C-terminus: Ezrin (92 aa).

The FERM domain maps to 1–72; the sequence is QLFDQVVKGF…PDFVFYAPRR (72 aa). Lys15 is subject to N6-acetyllysine. The segment at 42 to 92 is interaction with SCYL3; that stretch reads EIRNISFNDKKFVIKPIDKKAPDFVFYAPRRKPDTIEVQQMKLQDFEQKTK.

In terms of assembly, interacts with PALS1 and NHERF2. Found in a complex with EZR, PODXL and NHERF2. Interacts with MCC, PLEKHG6, PODXL, SCYL3/PACE1, NHERF1 and TMEM8B. Interacts (when phosphorylated) with FES/FPS. Interacts with dimeric S100P, the interaction may be activating through unmasking of F-actin binding sites. Identified in complexes that contain VIM, EZR, AHNAK, BFSP1, BFSP2, ANK2, PLEC, PRX and spectrin. Detected in a complex composed of at least EZR, AHNAK, PPL and PRX. Interacts with PDPN (via cytoplasmic domain); activates RHOA and promotes epithelial-mesenchymal transition. Interacts with SPN/CD43 cytoplasmic tail, CD44 and ICAM2. Interacts with CLIC5; may work together in a complex which also includes RDX and MYO6 to stabilize linkages between the plasma membrane and subjacent actin cytoskeleton at the base of stereocilia. Phosphorylated by tyrosine-protein kinases. Phosphorylation by ROCK2 suppresses the head-to-tail association of the N-terminal and C-terminal halves resulting in an opened conformation which is capable of actin and membrane-binding. Post-translationally, S-nitrosylation is induced by interferon-gamma and oxidatively-modified low-densitity lipoprotein (LDL(ox)) possibly implicating the iNOS-S100A8/9 transnitrosylase complex.

It localises to the apical cell membrane. It is found in the cell projection. Its subcellular location is the microvillus membrane. The protein localises to the ruffle membrane. The protein resides in the cytoplasm. It localises to the cell cortex. It is found in the cytoskeleton. Its subcellular location is the microvillus. Its activity is regulated as follows. A head-to-tail association, of the N-terminal and C-terminal halves results in a closed conformation (inactive form) which is incapable of actin or membrane-binding. Probably involved in connections of major cytoskeletal structures to the plasma membrane. In epithelial cells, required for the formation of microvilli and membrane ruffles on the apical pole. Along with PLEKHG6, required for normal macropinocytosis. The protein is Ezrin of Mesocricetus auratus (Golden hamster).